Consider the following 315-residue polypeptide: Olfactory receptor 5A1 (315 aa).

At 1–28 (MSITKAWNSSSVTMFILLGFTDHPELQA) the chain is on the extracellular side. Asn-8 carries N-linked (GlcNAc...) asparagine glycosylation. Residues 29–52 (LLFVTFLGIYLTTLAWNLALIFLI) form a helical membrane-spanning segment. Residues 53–60 (RGDTHLHT) are Cytoplasmic-facing. The helical transmembrane segment at 61–82 (PMYFFLSNLSFIDICYSSAVAP) threads the bilayer. Over 83–103 (NMLTDFFWEQKTISFVGCAAQ) the chain is Extracellular. The cysteines at positions 100 and 192 are disulfide-linked. A helical transmembrane segment spans residues 104-123 (FFFFVGMGLSECLLLTAMAY). The Cytoplasmic portion of the chain corresponds to 124–142 (DRYAAISSPLLYPTIMTQG). The chain crosses the membrane as a helical span at residues 143-161 (LCTRMVVGAYVGGFLSSLI). The Extracellular segment spans residues 162-198 (QASSIFRLHFCGPNIINHFFCDLPPVLALSCSDTFLS). The helical transmembrane segment at 199–222 (QVVNFLVVVTVGGTSFLQLLISYG) threads the bilayer. The Cytoplasmic segment spans residues 223–239 (YIVSAVLKIPSAEGRWK). A helical transmembrane segment spans residues 240–262 (ACNTCASHLMVVTLLFGTALFVY). Residues 263-275 (LRPSSSYLLGRDK) lie on the Extracellular side of the membrane. A helical transmembrane segment spans residues 276–295 (VVSVFYSLVIPMLNPLIYSL). Over 296-315 (RNKEIKDALWKVLERKKVFS) the chain is Cytoplasmic.

Belongs to the G-protein coupled receptor 1 family.

The protein resides in the cell membrane. Functionally, odorant receptor. The sequence is that of Olfactory receptor 5A1 (OR5A1) from Homo sapiens (Human).